A 223-amino-acid polypeptide reads, in one-letter code: Killer cell lectin-like receptor subfamily B member 1B allele A (223 aa).

Residues 1–45 (MDTAVVYADLHLARTGEPKREPPPSLSPDTCQCPRWHRLALKLGC) lie on the Cytoplasmic side of the membrane. The ITIM motif signature appears at 5 to 10 (VVYADL). The LCK-binding motif motif lies at 31–34 (CQCP). A helical; Signal-anchor for type II membrane protein transmembrane segment spans residues 46 to 66 (ACLILLVLSVIGLGVLVLTLL). Over 67 to 223 (QKPLIQNSPA…LKRESTCNDS (157 aa)) the chain is Extracellular. The 111-residue stretch at 101 to 211 (HQDKCFHVSQ…CDSDNIWICQ (111 aa)) folds into the C-type lectin domain. 2 disulfide bridges follow: cysteine 122–cysteine 210 and cysteine 189–cysteine 202.

In terms of assembly, homodimer; disulfide-linked. Interacts with tyrosine kinase LCK. Binds PTPN6/SHP-1 in a phosphorylation-dependent manner. As to expression, expressed in a subset of natural killer cells.

It localises to the membrane. Its function is as follows. Receptor for CLEC2D/OCIL. Ligand-binding contributes to inhibition of cytotoxic natural killer (NK) cells. May mediate MHC class I-independent 'missing-self' recognition of allografts, tumor cells and virus-infected cells. The chain is Killer cell lectin-like receptor subfamily B member 1B allele A from Rattus norvegicus (Rat).